Here is a 427-residue protein sequence, read N- to C-terminus: 3-phosphoshikimate 1-carboxyvinyltransferase (427 aa).

3 residues coordinate 3-phosphoshikimate: Lys-20, Ser-21, and Arg-25. Residue Lys-20 coordinates phosphoenolpyruvate. 2 residues coordinate phosphoenolpyruvate: Gly-92 and Arg-120. Positions 165, 167, 313, and 340 each coordinate 3-phosphoshikimate. Gln-167 is a binding site for phosphoenolpyruvate. Asp-313 acts as the Proton acceptor in catalysis. Phosphoenolpyruvate is bound by residues Arg-344 and Arg-388.

It belongs to the EPSP synthase family. Monomer.

It is found in the cytoplasm. The catalysed reaction is 3-phosphoshikimate + phosphoenolpyruvate = 5-O-(1-carboxyvinyl)-3-phosphoshikimate + phosphate. Its pathway is metabolic intermediate biosynthesis; chorismate biosynthesis; chorismate from D-erythrose 4-phosphate and phosphoenolpyruvate: step 6/7. Functionally, catalyzes the transfer of the enolpyruvyl moiety of phosphoenolpyruvate (PEP) to the 5-hydroxyl of shikimate-3-phosphate (S3P) to produce enolpyruvyl shikimate-3-phosphate and inorganic phosphate. The chain is 3-phosphoshikimate 1-carboxyvinyltransferase from Geobacillus kaustophilus (strain HTA426).